The following is a 349-amino-acid chain: 5-deoxyribose 1-phosphate isomerase (349 aa).

Substrate-binding positions include 49 to 51 (RGA), R92, and Q199. The Proton donor role is filled by D240. 250 to 251 (NK) serves as a coordination point for substrate.

It belongs to the EIF-2B alpha/beta/delta subunits family. DrdI subfamily.

The catalysed reaction is 5-deoxy-alpha-D-ribose 1-phosphate = 5-deoxy-D-ribulose 1-phosphate. Its pathway is carbohydrate degradation. In terms of biological role, catalyzes the isomerization of 5-deoxy-alpha-D-ribose 1-phosphate to 5-deoxy-D-ribulose 1-phosphate, as part of a 5-deoxyribose salvage pathway that recycles this toxic radical SAM enzyme by-product to mainstream metabolites. The chain is 5-deoxyribose 1-phosphate isomerase from Clostridium botulinum (strain Okra / Type B1).